The chain runs to 216 residues: Adenylate kinase (216 aa).

10-15 (GAGKGT) lines the ATP pocket. The NMP stretch occupies residues 30-59 (STGDMFRAAMKAETELGLQAKSFIDKGALV). AMP is bound by residues T31, R36, 57 to 59 (ALV), 85 to 88 (GFPR), and Q92. Residues 126-163 (GRRICKECGATYHLEFNPPAKADVCDKCGGELYQRSDD) form an LID region. R127 lines the ATP pocket. Zn(2+) contacts are provided by C130 and C133. 136 to 137 (TY) lines the ATP pocket. C150 and C153 together coordinate Zn(2+). AMP contacts are provided by R160 and R171. Q199 lines the ATP pocket.

The protein belongs to the adenylate kinase family. As to quaternary structure, monomer.

Its subcellular location is the cytoplasm. The enzyme catalyses AMP + ATP = 2 ADP. It functions in the pathway purine metabolism; AMP biosynthesis via salvage pathway; AMP from ADP: step 1/1. Functionally, catalyzes the reversible transfer of the terminal phosphate group between ATP and AMP. Plays an important role in cellular energy homeostasis and in adenine nucleotide metabolism. The chain is Adenylate kinase from Bacillus mycoides (strain KBAB4) (Bacillus weihenstephanensis).